Reading from the N-terminus, the 245-residue chain is Complement C1q subcomponent subunit C (245 aa).

Residues 1–28 (MDVGPSSLPHLGLKLLLLLLLLPLRGQA) form the signal peptide. The Collagen-like domain maps to 31–112 (GCYGIPGMPG…GIPGEPGEEG (82 aa)). 4-hydroxyproline is present on residues proline 36, proline 39, proline 42, proline 45, proline 54, and proline 63. The interval 45–113 (PGKDGYDGLP…IPGEPGEEGR (69 aa)) is disordered. Positions 54–71 (PGPKGEPGIPAIPGIRGP) are enriched in low complexity. Position 75 is a 5-hydroxylysine (lysine 75). O-linked (Gal...) hydroxylysine glycosylation occurs at lysine 75. 4-hydroxyproline occurs at positions 81, 93, 96, 99, and 105. Residues 90-99 (MGPPGMPGVP) show a composition bias toward pro residues. The 131-residue stretch at 115-245 (KQKFQSVFTV…VFSGFLLFPD (131 aa)) folds into the C1q domain. Cysteines 179 and 193 form a disulfide.

As to quaternary structure, core component of the complement C1 complex, a calcium-dependent complex composed of 1 molecule of the C1Q subcomplex, 2 molecules of C1R and 2 molecules of C1S. The C1Q subcomplex is composed 18 subunits: 3 chains of C1QA, C1QB, and C1QC trimerize to form 6 collagen-like triple helices connected to six globular ligand-recognition modules (C1q domain). O-linked glycans consist of Glc-Gal disaccharides bound to the oxygen atom of post-translationally added hydroxyl groups.

Its subcellular location is the secreted. It is found in the cell surface. With respect to regulation, the C1Q subcomplex is inhibited by sulfated molecules, such as triterpenoid sulfates, heparan sulfate, or chondroitin sulfates. Its function is as follows. Core component of the complement C1 complex, a multiprotein complex that initiates the classical pathway of the complement system, a cascade of proteins that leads to phagocytosis and breakdown of pathogens and signaling that strengthens the adaptive immune system. The classical complement pathway is initiated by the C1Q subcomplex of the C1 complex, which specifically binds IgG or IgM immunoglobulins complexed with antigens, forming antigen-antibody complexes on the surface of pathogens: C1QA, together with C1QB and C1QC, specifically recognizes and binds the Fc regions of IgG or IgM via its C1q domain. Immunoglobulin-binding activates the proenzyme C1R, which cleaves C1S, initiating the proteolytic cascade of the complement system. The C1Q subcomplex is activated by a hexamer of IgG complexed with antigens, while it is activated by a pentameric IgM. The C1Q subcomplex also recognizes and binds phosphatidylserine exposed on the surface of cells undergoing programmed cell death, possibly promoting activation of the complement system. The protein is Complement C1q subcomponent subunit C of Homo sapiens (Human).